The sequence spans 109 residues: Large ribosomal subunit protein uL24 (109 aa).

The protein belongs to the universal ribosomal protein uL24 family. As to quaternary structure, part of the 50S ribosomal subunit.

Functionally, one of two assembly initiator proteins, it binds directly to the 5'-end of the 23S rRNA, where it nucleates assembly of the 50S subunit. Its function is as follows. One of the proteins that surrounds the polypeptide exit tunnel on the outside of the subunit. This chain is Large ribosomal subunit protein uL24, found in Rickettsia rickettsii (strain Iowa).